The chain runs to 264 residues: 1H-3-hydroxy-4-oxoquinoline 2,4-dioxygenase (264 aa).

Residues 30 to 32, 94 to 95, and Trp-153 contribute to the substrate site; these read WCQ and TS. Residue His-244 is the Proton donor/acceptor of the active site.

Belongs to the AB hydrolase superfamily. It depends on None. Contrary to most other dioxygenases, this enzyme does not require a cofactor for catalysis. as a cofactor.

It carries out the reaction 3-hydroxy-1H-quinolin-4-one + O2 = N-formylanthranilate + CO + H(+). Its function is as follows. Ring-cleaving dioxygenase involved in oxoquinoline degradation and utilization. The polypeptide is 1H-3-hydroxy-4-oxoquinoline 2,4-dioxygenase (qdo) (Pseudomonas putida (Arthrobacter siderocapsulatus)).